The sequence spans 419 residues: Endothiapepsin (419 aa).

A signal peptide spans methionine 1 to serine 20. A propeptide spans serine 21 to arginine 89 (activation peptide). The region spanning tyrosine 106–alanine 417 is the Peptidase A1 domain. Active-site residues include aspartate 124 and serine 288. Cysteines 344 and 379 form a disulfide.

The protein belongs to the peptidase A1 family.

It catalyses the reaction Hydrolysis of proteins with specificity similar to that of pepsin A, prefers hydrophobic residues at P1 and P1', but does not cleave 14-Ala-|-Leu-15 in the B chain of insulin or Z-Glu-Tyr. Clots milk.. In Cryphonectria parasitica (Chestnut blight fungus), this protein is Endothiapepsin (EAPA).